Here is a 429-residue protein sequence, read N- to C-terminus: Ribosomal RNA small subunit methyltransferase B (429 aa).

Residues 254–260 (CAAPGGK), D277, D303, and D322 contribute to the S-adenosyl-L-methionine site. C375 functions as the Nucleophile in the catalytic mechanism. Positions 397 to 419 (ALSETGTPDQPGQQNLPGGEEGD) are disordered. Over residues 400–412 (ETGTPDQPGQQNL) the composition is skewed to polar residues.

Belongs to the class I-like SAM-binding methyltransferase superfamily. RsmB/NOP family.

It is found in the cytoplasm. It carries out the reaction cytidine(967) in 16S rRNA + S-adenosyl-L-methionine = 5-methylcytidine(967) in 16S rRNA + S-adenosyl-L-homocysteine + H(+). In terms of biological role, specifically methylates the cytosine at position 967 (m5C967) of 16S rRNA. This Salmonella paratyphi B (strain ATCC BAA-1250 / SPB7) protein is Ribosomal RNA small subunit methyltransferase B.